Reading from the N-terminus, the 571-residue chain is Kinesin light chain (571 aa).

A coiled-coil region spans residues 54 to 160 (LLTSMKTIRK…KKHLEFMNEM (107 aa)). Over residues 167–177 (EAQVNEEKESE) the composition is skewed to basic and acidic residues. The disordered stretch occupies residues 167-210 (EAQVNEEKESEQSSLDLGFPDDDDDGGQPEVLSPTQPSAMAQAA). TPR repeat units follow at residues 220–253 (LRTL…LEKT), 262–295 (ATML…REKT), 304–337 (AATL…REKV), 346–379 (AKQL…YQKE), 388–421 (AKTK…AHEK), and 471–504 (TTTL…RKSA). A disordered region spans residues 518–571 (GSDFSKGQSPKDRKRSNSRDRNRRDSMDSVSYEKSGDGDEHEKSKLHVGTSHKQ). 2 stretches are compositionally biased toward basic and acidic residues: residues 526–544 (SPKD…RDSM) and 551–562 (KSGDGDEHEKSK).

This sequence belongs to the kinesin light chain family. As to quaternary structure, oligomeric complex composed of two heavy chains and two light chains.

It localises to the cytoplasm. The protein resides in the cytoskeleton. Functionally, kinesin is a microtubule-associated force-producing protein that may play a role in organelle transport. The light chain may function in coupling of cargo to the heavy chain or in the modulation of its ATPase activity. This chain is Kinesin light chain, found in Doryteuthis pealeii (Longfin inshore squid).